The chain runs to 99 residues: Ferredoxin-2 (99 aa).

Residues 4 to 96 enclose the 2Fe-2S ferredoxin-type domain; that stretch reads YQVRLINKKR…DCTIRTHQEA (93 aa). [2Fe-2S] cluster contacts are provided by Cys-42, Cys-47, Cys-50, and Cys-80.

Belongs to the 2Fe2S plant-type ferredoxin family. It depends on [2Fe-2S] cluster as a cofactor.

Its function is as follows. Ferredoxins are iron-sulfur proteins that transfer electrons in a wide variety of metabolic reactions. Donates electrons to the nitrogenase. The polypeptide is Ferredoxin-2 (fdxH) (Leptolyngbya boryana (Plectonema boryanum)).